We begin with the raw amino-acid sequence, 426 residues long: 3-phosphoshikimate 1-carboxyvinyltransferase (426 aa).

3-phosphoshikimate is bound by residues K22, S23, and R27. Position 22 (K22) interacts with phosphoenolpyruvate. 2 residues coordinate phosphoenolpyruvate: G96 and R124. 3-phosphoshikimate-binding residues include S170, S171, Q172, S198, D314, N337, and K341. Q172 serves as a coordination point for phosphoenolpyruvate. D314 functions as the Proton acceptor in the catalytic mechanism. Positions 345, 387, and 412 each coordinate phosphoenolpyruvate.

The protein belongs to the EPSP synthase family. In terms of assembly, monomer.

It localises to the cytoplasm. The enzyme catalyses 3-phosphoshikimate + phosphoenolpyruvate = 5-O-(1-carboxyvinyl)-3-phosphoshikimate + phosphate. Its pathway is metabolic intermediate biosynthesis; chorismate biosynthesis; chorismate from D-erythrose 4-phosphate and phosphoenolpyruvate: step 6/7. Functionally, catalyzes the transfer of the enolpyruvyl moiety of phosphoenolpyruvate (PEP) to the 5-hydroxyl of shikimate-3-phosphate (S3P) to produce enolpyruvyl shikimate-3-phosphate and inorganic phosphate. The polypeptide is 3-phosphoshikimate 1-carboxyvinyltransferase (Vibrio atlanticus (strain LGP32) (Vibrio splendidus (strain Mel32))).